The following is a 912-amino-acid chain: DNA (cytosine-5)-methyltransferase 3A (912 aa).

Disordered stretches follow at residues 1–178 (MPAM…GWES) and 221–286 (IAGM…EYED). Basic and acidic residues predominate over residues 17–40 (AEREEDRKDGEEQEEPRGKEERQE). Positions 47–57 (KVGRPGRKRKH) are enriched in basic residues. The segment covering 74–83 (KSPSMAQDSG) has biased composition (polar residues). Ser-105 is modified (phosphoserine). Residues 113-128 (GAPAEGEGAAETLPEA) show a composition bias toward low complexity. A Phosphothreonine modification is found at Thr-124. The span at 149–167 (AGKEQKETNIESMKMEGSR) shows a compositional bias: basic and acidic residues. Residue Lys-162 forms a Glycyl lysine isopeptide (Lys-Gly) (interchain with G-Cter in SUMO2) linkage. Arg-171 is modified (omega-N-methylarginine). Positions 199 to 403 (SKRKRDEWLA…DTAKAVEVQN (205 aa)) are interaction with DNMT1 and DNMT3B. A phosphoserine mark is found at Ser-243 and Ser-255. Polar residues predominate over residues 246 to 260 (AVQQPTDPASPTVAT). Residue Thr-261 is modified to Phosphothreonine. Phosphoserine is present on Ser-267. Over residues 269 to 279 (AGDKNATKAGD) the composition is skewed to basic and acidic residues. The 59-residue stretch at 292–350 (IGELVWGKLRGFSWWPGRIVSWWMTGRSRAAEGTRWVMWFGDGKFSVVCVEKLMPLSSF) folds into the PWWP domain. Phosphoserine is present on residues Ser-390 and Ser-393. The disordered stretch occupies residues 447–466 (AYAPPPPAKKPRKSTAEKPK). The region spanning 482–614 (EVRQKCRNIE…LQMFFANNHD (133 aa)) is the ADD domain. The segment at 493 to 523 (ICISCGSLNVTLEHPLFVGGMCQNCKNCFLE) adopts a GATA-type; atypical zinc-finger fold. The interaction with the PRC2/EED-EZH2 complex stretch occupies residues 494 to 586 (CISCGSLNVT…KEDPWNCYMC (93 aa)). The PHD-type; atypical zinc-finger motif lies at 534-590 (QSYCTICCGGREVLMCGNNNCCRCFCVECVDLLVGPGAAQAAIKEDPWNCYMCGHKG). The region spanning 634–912 (IRVLSLFDGI…APLKEYFACV (279 aa)) is the SAM-dependent MTase C5-type domain. S-adenosyl-L-methionine-binding positions include 641–645 (DGIAT), Glu-664, and 686–688 (DVR). Cys-710 is an active-site residue. Residue Cys-710 is modified to S-methylcysteine; by autocatalysis. 891–893 (RSW) is an S-adenosyl-L-methionine binding site.

The protein belongs to the class I-like SAM-binding methyltransferase superfamily. C5-methyltransferase family. Heterotetramer composed of 1 DNMT3A homodimer and 2 DNMT3L subunits (DNMT3L-DNMT3A-DNMT3A-DNMT3L). Interacts with UBC9, PIAS1 and PIAS2. Binds the ZBTB18 transcriptional repressor. Interacts with SETDB1. Associates with HDAC1 through its ADD domain. Interacts with UHRF1. Interacts with DNMT1 and DNMT3B. Interacts with the PRC2/EED-EZH2 complex. Interacts with MPHOSPH8. Interacts with histone H3 that is not methylated at 'Lys-4' (H3K4). Interacts with SPOCD1. Interacts with ZNF263; recruited to the SIX3 promoter along with other proteins involved in chromatin modification and transcriptional corepression where it contributes to transcriptional repression. Post-translationally, sumoylated; sumoylation disrupts the ability to interact with histone deacetylases (HDAC1 and HDAC2) and repress transcription. In terms of processing, auto-methylated at Cys-710: auto-methylation takes place in absence of DNA substrate and inactivates the DNA methyltransferase activity. Inactivation by auto-methylation may be used to inactivate unused DNA methyltransferases in the cell. Highly expressed in fetal tissues, skeletal muscle, heart, peripheral blood mononuclear cells, kidney, and at lower levels in placenta, brain, liver, colon, spleen, small intestine and lung.

It is found in the nucleus. The protein resides in the chromosome. It localises to the cytoplasm. The enzyme catalyses a 2'-deoxycytidine in DNA + S-adenosyl-L-methionine = a 5-methyl-2'-deoxycytidine in DNA + S-adenosyl-L-homocysteine + H(+). The catalysed reaction is L-cysteinyl-[protein] + S-adenosyl-L-methionine = S-methyl-L-cysteinyl-[protein] + S-adenosyl-L-homocysteine + H(+). Its activity is regulated as follows. Activated by binding to the regulatory factor DNMT3L. Auto-methylation at Cys-710 in absence of DNA inactivates the DNA methyltransferase activity. Its function is as follows. Required for genome-wide de novo methylation and is essential for the establishment of DNA methylation patterns during development. DNA methylation is coordinated with methylation of histones. It modifies DNA in a non-processive manner and also methylates non-CpG sites. May preferentially methylate DNA linker between 2 nucleosomal cores and is inhibited by histone H1. Plays a role in paternal and maternal imprinting. Required for methylation of most imprinted loci in germ cells. Acts as a transcriptional corepressor for ZBTB18. Recruited to trimethylated 'Lys-36' of histone H3 (H3K36me3) sites. Can actively repress transcription through the recruitment of HDAC activity. Also has weak auto-methylation activity on Cys-710 in absence of DNA. This chain is DNA (cytosine-5)-methyltransferase 3A (DNMT3A), found in Homo sapiens (Human).